Here is a 218-residue protein sequence, read N- to C-terminus: Oxidative stress regulator AosR (218 aa).

The CXXXC motif lies at C5–C9. C5 and C9 are oxidised to a cystine.

It belongs to the AosR family. As to quaternary structure, homodimer. Under oxidative stress, interacts with the extracytoplasmic-function (ECF) RNA polymerase sigma factor SigH.

Activity is modulated by the formation of a disulfide bound within the N-terminal Cys-X-X-X-Cys (CXXXC) motif. This intramolecular disulfide bond is formed in response to oxidative stress, and results in oxidative stress-dependent interaction with the sigma factor SigH. Transcription factor crucial for intra-mycobacterial redox homeostasis and protection against host-derived oxidative and nitrosative radicals. In response to oxidative stress, interacts with the ECF sigma factor SigH and, in conjunction with SigH, binds to an auxiliary promoter upstream of mec-cysO-cysM, leading to the transcriptional activation of these genes encoding a non-canonical actinomycete-specific cysteine biosynthesis pathway. Increased transcription of mec-cysO-cysM results in enhanced production of L-cysteine and cysteine-derived antioxidant molecules. Increased production of cysteine protects mycobacteria cells from host phagocyte-derived oxidative and nitrosative stress, thus facilitating the mycobacterial growth in the host. This chain is Oxidative stress regulator AosR, found in Mycobacterium bovis (strain ATCC BAA-935 / AF2122/97).